An 87-amino-acid polypeptide reads, in one-letter code: Small ribosomal subunit protein bS20 (87 aa).

A disordered region spans residues 1–22 (MANTSQARKRARQAGVRRVRNA). The span at 7–20 (ARKRARQAGVRRVR) shows a compositional bias: basic residues.

Belongs to the bacterial ribosomal protein bS20 family.

Binds directly to 16S ribosomal RNA. The sequence is that of Small ribosomal subunit protein bS20 from Nitrosococcus oceani (strain ATCC 19707 / BCRC 17464 / JCM 30415 / NCIMB 11848 / C-107).